The primary structure comprises 587 residues: Bifunctional dihydrofolate reductase-thymidylate synthase (587 aa).

The DHFR domain maps to 9 to 237; that stretch reads DIYAICACCK…TTLDFIIYSK (229 aa). Residue 36–42 participates in NADP(+) binding; the sequence is GIGNAGV. Residue D51 participates in substrate binding. NADP(+)-binding positions include 108–110 and 129–132; these read KKS and LSRT. The substrate site is built by I173, Y179, and T194. An NADP(+)-binding site is contributed by 174–181; the sequence is GGSSVYKE. Positions 301–587 are thymidylate synthase; it reads NHPEYQYLNI…HDKINMDMAA (287 aa). R324 provides a ligand contact to dUMP. Residue C469 is part of the active site. DUMP-binding positions include H470, 488–492, N500, and 530–532; these read QRSCD and HVY.

The protein in the N-terminal section; belongs to the dihydrofolate reductase family. It in the C-terminal section; belongs to the thymidylate synthase family. As to quaternary structure, homodimer.

The enzyme catalyses (6S)-5,6,7,8-tetrahydrofolate + NADP(+) = 7,8-dihydrofolate + NADPH + H(+). It catalyses the reaction dUMP + (6R)-5,10-methylene-5,6,7,8-tetrahydrofolate = 7,8-dihydrofolate + dTMP. Its pathway is cofactor biosynthesis; tetrahydrofolate biosynthesis; 5,6,7,8-tetrahydrofolate from 7,8-dihydrofolate: step 1/1. Bifunctional enzyme. Involved in de novo dTMP biosynthesis. Key enzyme in folate metabolism. Catalyzes an essential reaction for de novo glycine and purine synthesis, DNA precursor synthesis, and for the conversion of dUMP to dTMP. The polypeptide is Bifunctional dihydrofolate reductase-thymidylate synthase (Plasmodium berghei (strain Anka)).